The sequence spans 71 residues: Translation initiation factor IF-1 (71 aa).

Residues 1 to 71 (MSKQEMLSFS…LTKGRITFRG (71 aa)) form the S1-like domain.

This sequence belongs to the IF-1 family. As to quaternary structure, component of the 30S ribosomal translation pre-initiation complex which assembles on the 30S ribosome in the order IF-2 and IF-3, IF-1 and N-formylmethionyl-tRNA(fMet); mRNA recruitment can occur at any time during PIC assembly.

It localises to the cytoplasm. In terms of biological role, one of the essential components for the initiation of protein synthesis. Stabilizes the binding of IF-2 and IF-3 on the 30S subunit to which N-formylmethionyl-tRNA(fMet) subsequently binds. Helps modulate mRNA selection, yielding the 30S pre-initiation complex (PIC). Upon addition of the 50S ribosomal subunit IF-1, IF-2 and IF-3 are released leaving the mature 70S translation initiation complex. This is Translation initiation factor IF-1 from Pelagibacter ubique (strain HTCC1062).